We begin with the raw amino-acid sequence, 273 residues long: Bis(5'-nucleosyl)-tetraphosphatase, symmetrical (273 aa).

This sequence belongs to the Ap4A hydrolase family.

The enzyme catalyses P(1),P(4)-bis(5'-adenosyl) tetraphosphate + H2O = 2 ADP + 2 H(+). Functionally, hydrolyzes diadenosine 5',5'''-P1,P4-tetraphosphate to yield ADP. In Histophilus somni (strain 129Pt) (Haemophilus somnus), this protein is Bis(5'-nucleosyl)-tetraphosphatase, symmetrical.